The chain runs to 498 residues: Probable malate:quinone oxidoreductase 2 (498 aa).

It belongs to the MQO family. The cofactor is FAD.

It carries out the reaction (S)-malate + a quinone = a quinol + oxaloacetate. The protein operates within carbohydrate metabolism; tricarboxylic acid cycle; oxaloacetate from (S)-malate (quinone route): step 1/1. The sequence is that of Probable malate:quinone oxidoreductase 2 from Staphylococcus epidermidis (strain ATCC 35984 / DSM 28319 / BCRC 17069 / CCUG 31568 / BM 3577 / RP62A).